Consider the following 392-residue polypeptide: MRTVRDLEVEERRVLVRVDYNVPLEGGRVVDDTRIRATLPTLQWLLERRARIILCSHLGRPKGQVREELRLAPVAATLSGLLGQPVRSVRDIVGPEAQEMARRLQPGEVGMLENLRFDPREEQNDAEFAAALAALADCYVNDAFGAAHRAHASVVAVARLLPSAAGFLMEREVQALERVLRSDERPFVLVLGGAKVSDKIGVIENLLPRADALLLGGGMANTFLRARGLETGRSLVEEEKVPEAQRILDLAAARGVRVELPRDVVVAPTMSAVSQRRIVPVTAIPPDQAVYDIGPETVRAYSAVIAGARLLVWNGPMGVYEVPEFREGTKGIAEAVAGCSGFTLVGGGDSAAALQELGLAERVGHLSTGGGATLEYLEGRELPGVAVLMEEA.

Residues 19–21, arginine 34, 57–60, arginine 116, and arginine 149 contribute to the substrate site; these read DYN and HLGR. Residues lysine 199, glutamate 321, and 347–350 contribute to the ATP site; that span reads GGDS.

It belongs to the phosphoglycerate kinase family. Monomer.

It is found in the cytoplasm. It carries out the reaction (2R)-3-phosphoglycerate + ATP = (2R)-3-phospho-glyceroyl phosphate + ADP. Its pathway is carbohydrate degradation; glycolysis; pyruvate from D-glyceraldehyde 3-phosphate: step 2/5. This chain is Phosphoglycerate kinase, found in Thermomicrobium roseum (strain ATCC 27502 / DSM 5159 / P-2).